Reading from the N-terminus, the 124-residue chain is Small ribosomal subunit protein uS12 (124 aa).

D89 carries the post-translational modification 3-methylthioaspartic acid. A disordered region spans residues 103 to 124 (DTAGVKDRRQSRSKYGAKSPKE).

This sequence belongs to the universal ribosomal protein uS12 family. Part of the 30S ribosomal subunit. Contacts proteins S8 and S17. May interact with IF1 in the 30S initiation complex.

Functionally, with S4 and S5 plays an important role in translational accuracy. Its function is as follows. Interacts with and stabilizes bases of the 16S rRNA that are involved in tRNA selection in the A site and with the mRNA backbone. Located at the interface of the 30S and 50S subunits, it traverses the body of the 30S subunit contacting proteins on the other side and probably holding the rRNA structure together. The combined cluster of proteins S8, S12 and S17 appears to hold together the shoulder and platform of the 30S subunit. This is Small ribosomal subunit protein uS12 from Prochlorococcus marinus (strain NATL1A).